Here is a 113-residue protein sequence, read N- to C-terminus: Ig heavy chain V region 36-60 (113 aa).

This is Ig heavy chain V region 36-60 from Mus musculus (Mouse).